The following is a 489-amino-acid chain: Cytochrome P450 monooxygenase AMT3 (489 aa).

Residues 292 to 312 form a helical membrane-spanning segment; it reads LFMVAGTETTITALSGLVFLL. A heme-binding site is contributed by cysteine 436.

The protein belongs to the cytochrome P450 family. Heme is required as a cofactor.

The protein resides in the membrane. Its pathway is mycotoxin biosynthesis. Cytochrome P450 monooxygenase; part of the gene clusters that mediate the biosynthesis of AM-toxins, host-selective toxins (HSTs) causing Alternaria blotch on apple, a worldwide distributed disease. AM-toxins are cyclic depsipeptides containing the 3 residues 2-hydroxy-isovaleric acid (2-HIV), dehydroalanine, L-alanine which are common for all 3 AM-toxins I to III. The fourth precursor is L-alpha-amino-methoxyphenyl-valeric acid (L-Amv) for AM-toxin I, L-alpha-amino-phenyl-valeric acid (L-Apv) for AM-toxin II, and L-alpha-amino-hydroxyphenyl-valeric acid (L-Ahv) for AM-toxin III. AM-toxins have two target sites for affecting susceptible apple cells; they cause invagination of the plasma membrane and electrolyte loss and chloroplast disorganization. The non-ribosomal peptide synthetase AMT1 contains 4 catalytic modules and is responsible for activation of each residue in AM-toxin. The aldo-keto reductase AMT2 catalyzes the conversion of 2-keto-isovaleric acid (2-KIV) to 2-hydroxy-isovaleric acid (2-HIV), one of the precursor residues incorporated by AMT1 during AM-toxin biosynthesis, by reduction of its ketone to an alcohol. The cytochrome P450 monooxygenase AMT3 and the thioesterase AMT4 are also important for AM-toxin production, but their exact function within the AM-toxin biosynthesis are not known yet. Up to 21 proteins (including AMT1 to AMT4) are predicted to be involved in AM-toxin biosynthesis since their expression ishighly up-regulated in AM-toxin-producing cultures. In Alternaria alternata (Alternaria rot fungus), this protein is Cytochrome P450 monooxygenase AMT3.